The following is a 111-amino-acid chain: Probable 4-amino-4-deoxy-L-arabinose-phosphoundecaprenol flippase subunit ArnE (111 aa).

3 helical membrane passes run 38-58, 61-81, and 89-109; these read LWLG…LLVL, LPVG…TLAA, and VLPR…ILGS. One can recognise an EamA domain in the interval 40 to 109; the sequence is LGLALICMGA…IISGIIILGS (70 aa).

It belongs to the ArnE family. In terms of assembly, heterodimer of ArnE and ArnF.

It is found in the cell inner membrane. The protein operates within bacterial outer membrane biogenesis; lipopolysaccharide biosynthesis. Its function is as follows. Translocates 4-amino-4-deoxy-L-arabinose-phosphoundecaprenol (alpha-L-Ara4N-phosphoundecaprenol) from the cytoplasmic to the periplasmic side of the inner membrane. In Salmonella paratyphi A (strain ATCC 9150 / SARB42), this protein is Probable 4-amino-4-deoxy-L-arabinose-phosphoundecaprenol flippase subunit ArnE.